The chain runs to 518 residues: ATP synthase subunit alpha (518 aa).

Residue 169-176 (GDRQTGKT) coordinates ATP.

This sequence belongs to the ATPase alpha/beta chains family. As to quaternary structure, F-type ATPases have 2 components, CF(1) - the catalytic core - and CF(0) - the membrane proton channel. CF(1) has five subunits: alpha(3), beta(3), gamma(1), delta(1), epsilon(1). CF(0) has three main subunits: a(1), b(2) and c(9-12). The alpha and beta chains form an alternating ring which encloses part of the gamma chain. CF(1) is attached to CF(0) by a central stalk formed by the gamma and epsilon chains, while a peripheral stalk is formed by the delta and b chains.

The protein localises to the cell membrane. The enzyme catalyses ATP + H2O + 4 H(+)(in) = ADP + phosphate + 5 H(+)(out). In terms of biological role, produces ATP from ADP in the presence of a proton gradient across the membrane. The alpha chain is a regulatory subunit. In Mycoplasma pneumoniae (strain ATCC 29342 / M129 / Subtype 1) (Mycoplasmoides pneumoniae), this protein is ATP synthase subunit alpha.